The following is a 305-amino-acid chain: Serine/threonine-protein phosphatase PP-X isozyme 2 (305 aa).

Mn(2+) is bound by residues D51, H53, D79, and N111. H112 functions as the Proton donor in the catalytic mechanism. Mn(2+)-binding residues include H161 and H236.

This sequence belongs to the PPP phosphatase family. PP-4 (PP-X) subfamily. Mn(2+) serves as cofactor. As to expression, ubiquitous, mostly expressed in root mersitems, flowers, and vascular tissues.

The protein localises to the plastid stroma. The enzyme catalyses O-phospho-L-seryl-[protein] + H2O = L-seryl-[protein] + phosphate. It carries out the reaction O-phospho-L-threonyl-[protein] + H2O = L-threonyl-[protein] + phosphate. The polypeptide is Serine/threonine-protein phosphatase PP-X isozyme 2 (PPX2) (Arabidopsis thaliana (Mouse-ear cress)).